A 251-amino-acid polypeptide reads, in one-letter code: MFRLVYTASSKFKYIAQTLAKINDEGVFEFSLDGLRAWIMSPDKTSLAILEMPSLSFEEYMVEEEMRVVLRTDELNKISKRATRNDDIIFQWNAEEQALEVELRDRKLGFSRKFLVPATSVGAEEMRRLKLEPTVSFTILTDDLKAMIQDVKVVGDFAEFEASEGQVVVRSQAEEKEYEWVMKPGDVLLSLEVEEDAKSIYSRQVLEIATKPVGAAESVKVSFASDYPMKIEYTFPNGERMELYMAPSLAG.

The protein belongs to the PCNA family. In terms of assembly, heterotrimer. The subunits circularize to form a toroid; DNA passes through its center. Replication factor C (RFC) is required to load the toroid on the DNA.

Its function is as follows. Sliding clamp subunit that acts as a moving platform for DNA processing. Responsible for tethering the catalytic subunit of DNA polymerase and other proteins to DNA during high-speed replication. The chain is DNA polymerase sliding clamp 2 from Aeropyrum pernix (strain ATCC 700893 / DSM 11879 / JCM 9820 / NBRC 100138 / K1).